A 129-amino-acid polypeptide reads, in one-letter code: Small ribosomal subunit protein uS11 (129 aa).

The protein belongs to the universal ribosomal protein uS11 family. Part of the 30S ribosomal subunit. Interacts with proteins S7 and S18. Binds to IF-3.

Its function is as follows. Located on the platform of the 30S subunit, it bridges several disparate RNA helices of the 16S rRNA. Forms part of the Shine-Dalgarno cleft in the 70S ribosome. This is Small ribosomal subunit protein uS11 from Bacillus anthracis (strain A0248).